The sequence spans 505 residues: MEEIQRYLQLDRSQQPSFLYPLIFQEYIYALAHGHNLNRAILLENPGYDNKSSFLIVKRLITRMYQQNHFLTSANDSSQNPFIGRNKNLYSKMISEGFSFIVEIPFSMRLISSEERKGIFQSHNLRSIHSIFPFLEDNFSHFNLMLDIQIPHPVHLEILVQTLRYWVKDAPSLHLLRFFLREYCNCNKIISTKKPGFLFLTKKNQRLFFLLYNFYVCEYESIFVFLHTQSSHLRPTSFGVFRERIYFYGKIEHFAEVFAKDFPTNLCLFKYPFMHYVRYQGKSILLSRGTALLMNKWKSYLVNFWQCNFDLWVHSRRAYIKQVYNYSLDFMGYLSIVRQTPLTVRSQMLKNAFLIKNPINKLDTLVPIIPLIGSFAKAKFCNLLGHPISKPVRTDLSDSDIMDRFGRICRNLSHYYSGSSKKKSLYRIKYILRLSCAKTLARKHKSTVRAFLKRLGSEFLEEFFMSEEEVFSLTFPRVYSLFLGVYRSRIWYLDITCINDLANQQ.

This sequence belongs to the intron maturase 2 family. MatK subfamily.

It localises to the plastid. Its subcellular location is the chloroplast. Its function is as follows. Usually encoded in the trnK tRNA gene intron. Probably assists in splicing its own and other chloroplast group II introns. The polypeptide is Maturase K (Apocynum androsaemifolium (Spreading dogbane)).